A 373-amino-acid polypeptide reads, in one-letter code: Protein translocase subunit SecF (373 aa).

The next 6 helical transmembrane spans lie at 26-46, 142-162, 166-186, 193-213, 251-271, and 280-300; these read IWYGISILITITAIVGLAVRG, WQGLGIFMVLVVIYLAIAFEW, LAAFVALIHDITITVGIYALV, GTVIGLLTILGYSLYDTVVVF, VVALLPVAGLLFIGGGVLGAG, and LFVGLAAGAYSSIFIATPLVA. Residues 322 to 332 show a composition bias toward low complexity; the sequence is QGAAKGESAES. The segment at 322–373 is disordered; sequence QGAAKGESAESAADEGAYDADEPDDAAPAVVGPRNQPASRGRGRGRPSGKRR. Residues 333 to 346 show a composition bias toward acidic residues; sequence AADEGAYDADEPDD. The span at 362–373 shows a compositional bias: basic residues; it reads GRGRGRPSGKRR.

Belongs to the SecD/SecF family. SecF subfamily. As to quaternary structure, forms a complex with SecD. Part of the essential Sec protein translocation apparatus which comprises SecA, SecYEG and auxiliary proteins SecDF. Other proteins may also be involved.

Its subcellular location is the cell membrane. Its function is as follows. Part of the Sec protein translocase complex. Interacts with the SecYEG preprotein conducting channel. SecDF uses the proton motive force (PMF) to complete protein translocation after the ATP-dependent function of SecA. This chain is Protein translocase subunit SecF, found in Streptomyces coelicolor (strain ATCC BAA-471 / A3(2) / M145).